The sequence spans 348 residues: Galactose-1-phosphate uridylyltransferase (348 aa).

28–31 contributes to the UDP-alpha-D-glucose binding site; that stretch reads RAKR. Zn(2+) is bound by residues C52 and C55. UDP-alpha-D-glucose-binding positions include V61 and 77–78; that span reads ND. H115 lines the Zn(2+) pocket. UDP-alpha-D-glucose is bound by residues N153 and 159 to 161; that span reads GCS. Zn(2+) is bound at residue H164. Residue H166 is the Tele-UMP-histidine intermediate of the active site. Q168 serves as a coordination point for UDP-alpha-D-glucose. 4 residues coordinate Fe cation: E182, H281, H296, and H298. Residues 311–312, 316–317, and Q323 contribute to the UDP-alpha-D-glucose site; these read KF and YE.

This sequence belongs to the galactose-1-phosphate uridylyltransferase type 1 family. As to quaternary structure, homodimer. Requires Zn(2+) as cofactor.

It catalyses the reaction alpha-D-galactose 1-phosphate + UDP-alpha-D-glucose = alpha-D-glucose 1-phosphate + UDP-alpha-D-galactose. It functions in the pathway carbohydrate metabolism; galactose metabolism. This Escherichia coli (strain K12) protein is Galactose-1-phosphate uridylyltransferase (galT).